Consider the following 432-residue polypeptide: Putative O-antigen transporter (432 aa).

Transmembrane regions (helical) follow at residues 14–34, 47–67, 90–110, 134–154, 164–184, 189–209, 234–254, 271–291, 305–325, 334–354, 376–396, and 400–420; these read IIAA…LVSV, AVFT…IGIG, AAVH…FFLS, FIAS…KILF, IINA…HYLM, ITFA…IYIS, GFLI…IVMS, IFGL…PVCA, IIFL…LFIY, IIAN…LAVY, ILWL…WYFA, and GIVG…FWGL.

It localises to the cell inner membrane. The protein operates within bacterial outer membrane biogenesis; LPS O-antigen biosynthesis. Functionally, may be involved in the translocation process of the nascent O-polysaccharide molecules and/or its ligation to lipid A core units. The polypeptide is Putative O-antigen transporter (rfbX) (Salmonella typhi).